A 403-amino-acid polypeptide reads, in one-letter code: MSKFNRIHLVVLDSVGIGAAPDADKFFNAGVADTDSDTLGHISETAGLSVPNMAKIGLGNISRPIPLKTVPTEDNPTGYVTKLEEVSLGKDTMTGHWEIMGLNITEPFDTFWNGFPEEILTKIEEFSGRKIIREANKPYSGTAVIDDFGPRQMETGELIVYTSADPVLQIAAHEDIIPVEELYKICEYARSITLERPALLGRIIARPYVGEPGNFTRTANRHDYAVSPFQDTVLNKLADAGVPTYAVGKINDIFNGSGITNDMGHNKSNSHGIDTLIKTLQLPEFTKGFSFTNLVDFDANFGHRRDPEGYRDCLHEFDNRLPEIIANMKEDDLLLITADHGNDPTYAGTDHTREYIPLLAYSASFTGNGLIPQGHFADISATVAENFGVDTAMIGESFLGHLK.

6 residues coordinate Mn(2+): Asp13, Asp298, His303, Asp339, His340, and His351.

The protein belongs to the phosphopentomutase family. Mn(2+) serves as cofactor.

The protein resides in the cytoplasm. The enzyme catalyses 2-deoxy-alpha-D-ribose 1-phosphate = 2-deoxy-D-ribose 5-phosphate. It catalyses the reaction alpha-D-ribose 1-phosphate = D-ribose 5-phosphate. It participates in carbohydrate degradation; 2-deoxy-D-ribose 1-phosphate degradation; D-glyceraldehyde 3-phosphate and acetaldehyde from 2-deoxy-alpha-D-ribose 1-phosphate: step 1/2. In terms of biological role, isomerase that catalyzes the conversion of deoxy-ribose 1-phosphate (dRib-1-P) and ribose 1-phosphate (Rib-1-P) to deoxy-ribose 5-phosphate (dRib-5-P) and ribose 5-phosphate (Rib-5-P), respectively. The sequence is that of Phosphopentomutase from Streptococcus pyogenes serotype M2 (strain MGAS10270).